We begin with the raw amino-acid sequence, 239 residues long: Protein canopy homolog 4 (239 aa).

An N-terminal signal peptide occupies residues 1-20 (MGPVRLGTLLFILTVYGAWA). Disulfide bonds link Cys37–Cys195, Cys40–Cys183, and Cys93–Cys155. The tract at residues 199-239 (TWTGKEKITDGQEKTEEEEQDQEEEEMTNTPVHSQHDPEDL) is disordered. The span at 201 to 212 (TGKEKITDGQEK) shows a compositional bias: basic and acidic residues. Residues 213–225 (TEEEEQDQEEEEM) are compositionally biased toward acidic residues.

It belongs to the canopy family. In terms of assembly, interacts with TLR4.

Its subcellular location is the secreted. Plays a role in the regulation of the cell surface expression of TLR4. The chain is Protein canopy homolog 4 (CNPY4) from Bos taurus (Bovine).